The primary structure comprises 90 residues: Small ribosomal subunit protein uS15c (90 aa).

Belongs to the universal ribosomal protein uS15 family. In terms of assembly, part of the 30S ribosomal subunit.

The protein resides in the plastid. The protein localises to the chloroplast. The polypeptide is Small ribosomal subunit protein uS15c (rps15-A) (Zea mays (Maize)).